A 323-amino-acid chain; its full sequence is UDP-galactose/UDP-glucose transporter 7 (323 aa).

Residues 1–10 (MEVQAEMEPT) lie on the Cytoplasmic side of the membrane. A helical transmembrane segment spans residues 11–31 (SSISLVAAVSYGIASMAMVFI). The Lumenal portion of the chain corresponds to 32–35 (NKAV). A helical membrane pass occupies residues 36–58 (IMQYPHSMTVLTLQQLATSLLIH). Topologically, residues 59–78 (FGRRMGYTRAKGIDMATAKK) are cytoplasmic. Residues 79-97 (LLPVSIFYNANVAFALASL) form a helical membrane-spanning segment. At 98-101 (KGVN) the chain is on the lumenal side. The helical transmembrane segment at 102–124 (IPMYIAIKRLTPLAVLISGVLFG) threads the bilayer. Residues 125-132 (KGKPTTQV) are Cytoplasmic-facing. A helical membrane pass occupies residues 133-153 (ALSVLLTAAGCVIAALGDFSF). Position 154 (D154) is a topological domain, lumenal. A helical membrane pass occupies residues 155 to 175 (LFGYGLALTSVFFQTMYLVLV). The Cytoplasmic segment spans residues 176-186 (EKSGAEDGLSS). Residues 187–207 (IEIMFYNSFLSLPFLSILIIV) traverse the membrane as a helical segment. At 208 to 226 (TGEFPNSLSLLLAKCSYLP) the chain is on the lumenal side. A helical transmembrane segment spans residues 227–247 (FLVILILSLVMGIVLNFTMFL). The Cytoplasmic segment spans residues 248-252 (CTIVN). Residues 253–275 (SALTTTIVGVLKGVGSTTLGFVL) form a helical membrane-spanning segment. The Lumenal segment spans residues 276–278 (LGG). A helical transmembrane segment spans residues 279–301 (VEVHALNVSGLVVNTAGGVWYSY). Residues 302-323 (AKYRQKKAKPAKLMSDLEAHKK) are Cytoplasmic-facing.

It belongs to the TPT transporter family. UGnT (TC 2.A.7.15) subfamily. As to expression, widely expressed with highest expression in roots.

Its subcellular location is the golgi apparatus membrane. Nucleotide-sugar transporter that transports UDP-glucose and UDP-galactose. Plays a role in lateral root and root hair development. The chain is UDP-galactose/UDP-glucose transporter 7 from Arabidopsis thaliana (Mouse-ear cress).